Consider the following 554-residue polypeptide: Hydroxylamine reductase (554 aa).

The [2Fe-2S] cluster site is built by Cys-3, Cys-6, Cys-18, and Cys-25. Positions 252, 276, 320, 408, 436, 461, 495, and 497 each coordinate hybrid [4Fe-2O-2S] cluster. At Cys-408 the chain carries Cysteine persulfide.

Belongs to the HCP family. It depends on [2Fe-2S] cluster as a cofactor. Hybrid [4Fe-2O-2S] cluster is required as a cofactor.

Its subcellular location is the cytoplasm. The enzyme catalyses A + NH4(+) + H2O = hydroxylamine + AH2 + H(+). Functionally, catalyzes the reduction of hydroxylamine to form NH(3) and H(2)O. This chain is Hydroxylamine reductase, found in Shewanella oneidensis (strain ATCC 700550 / JCM 31522 / CIP 106686 / LMG 19005 / NCIMB 14063 / MR-1).